A 444-amino-acid chain; its full sequence is MSFDLNRRQLMISAATAAGALALGPARDAFGQARVQITEGNVAPLPIAIPNFVAGTPSDAEVGTGVSQVITNNLKRSGLFAPIDQAAYLEKITNIDVPPQFKSWASINAQALVTGRMTRQGDGRLKAEFRLWDVATGQQLAGQQYFTSPEYWRRIAHIISDQIYERLTGEKGYFDSRVVFIDESGPADRRVKRLALMDQDGANVRYLTRGSDLVLTPRFSPTNQEITYMEFGQGEPRVYLFNVETGQREIVGNFPGMSFAPRFSPDGQRIIMSLQQGGNSNLFVMDLRSKATTRLTDTPAIDTSPSYAPDGSRICFESDRGGKPQIYIMPASGGQAQRISFGDGSYSTPVWSPRGDYIAFTKQGGGQFAIGIMKPDGSGERILTSGFHNEGPTFAPNGRVLMFFRDPGGNAGPSLFTVDVSGRNELRVPTPGYASDPAWSPLLS.

A signal peptide spans methionine 1–glycine 31.

Belongs to the TolB family. In terms of assembly, the Tol-Pal system is composed of five core proteins: the inner membrane proteins TolA, TolQ and TolR, the periplasmic protein TolB and the outer membrane protein Pal. They form a network linking the inner and outer membranes and the peptidoglycan layer.

The protein localises to the periplasm. Functionally, part of the Tol-Pal system, which plays a role in outer membrane invagination during cell division and is important for maintaining outer membrane integrity. The protein is Tol-Pal system protein TolB of Rhodopseudomonas palustris (strain ATCC BAA-98 / CGA009).